Consider the following 878-residue polypeptide: Alanine--tRNA ligase (878 aa).

The Zn(2+) site is built by His-562, His-566, Cys-670, and His-674.

This sequence belongs to the class-II aminoacyl-tRNA synthetase family. Requires Zn(2+) as cofactor.

It localises to the cytoplasm. It catalyses the reaction tRNA(Ala) + L-alanine + ATP = L-alanyl-tRNA(Ala) + AMP + diphosphate. Functionally, catalyzes the attachment of alanine to tRNA(Ala) in a two-step reaction: alanine is first activated by ATP to form Ala-AMP and then transferred to the acceptor end of tRNA(Ala). Also edits incorrectly charged Ser-tRNA(Ala) and Gly-tRNA(Ala) via its editing domain. This is Alanine--tRNA ligase from Acinetobacter baumannii (strain ACICU).